Here is a 548-residue protein sequence, read N- to C-terminus: Pentatricopeptide repeat-containing protein At1g62680, mitochondrial (548 aa).

A mitochondrion-targeting transit peptide spans 1–43 (MQRSIAMTAKRFLHRNLLENGKPRTASSPSFSHCSSCRCWVRA). 12 PPR repeats span residues 84 to 118 (SIVD…GIRN), 119 to 153 (DLYT…GYEP), 154 to 188 (DRVT…GYKP), 189 to 223 (DIVA…GIRP), 224 to 258 (NVVT…KITP), 259 to 293 (NVIT…SIDP), 294 to 328 (DIVT…GCLA), 329 to 363 (DVVS…GLVS), 364 to 398 (NTVT…GISP), 399 to 433 (DIWT…EMDL), 434 to 468 (DIVT…GLKP), and 469 to 503 (DIVT…GLMK).

This sequence belongs to the PPR family. P subfamily.

It is found in the mitochondrion. The chain is Pentatricopeptide repeat-containing protein At1g62680, mitochondrial from Arabidopsis thaliana (Mouse-ear cress).